The primary structure comprises 262 residues: Nickel import ATP-binding protein NikD (262 aa).

The 244-residue stretch at 6-249 folds into the ABC transporter domain; sequence LAIEGLTATT…PGHEVTRMLV (244 aa). Residue 42–49 coordinates ATP; it reads GASGSGKS.

Belongs to the ABC transporter superfamily. Nickel importer (TC 3.A.1.5.3) family. In terms of assembly, the complex is composed of two ATP-binding proteins (NikD and NikE), two transmembrane proteins (NikB and NikC) and a solute-binding protein (NikA).

The protein resides in the cell inner membrane. It carries out the reaction Ni(2+)(out) + ATP + H2O = Ni(2+)(in) + ADP + phosphate + H(+). Functionally, part of the ABC transporter complex NikABCDE involved in nickel import. Responsible for energy coupling to the transport system. The protein is Nickel import ATP-binding protein NikD of Brucella abortus biovar 1 (strain 9-941).